Reading from the N-terminus, the 245-residue chain is GDSL esterase/lipase At4g16220 (245 aa).

Residues 1–24 (MSSLVSRCQVIALLVLFFFGVCLA) form the signal peptide. Ser37 acts as the Nucleophile in catalysis.

This sequence belongs to the 'GDSL' lipolytic enzyme family.

It is found in the secreted. In Arabidopsis thaliana (Mouse-ear cress), this protein is GDSL esterase/lipase At4g16220.